The sequence spans 60 residues: Large ribosomal subunit protein bL32 (60 aa).

Basic residues predominate over residues 1-16 (MAVPRRKTSPSRRGMR). The disordered stretch occupies residues 1 to 60 (MAVPRRKTSPSRRGMRRSADALKRPTYAEDKDSGELRRPHHLDLKTGMYKGRQVIKKKDA). A compositionally biased stretch (basic and acidic residues) spans 17-44 (RSADALKRPTYAEDKDSGELRRPHHLDL).

This sequence belongs to the bacterial ribosomal protein bL32 family.

This chain is Large ribosomal subunit protein bL32, found in Rhodopseudomonas palustris (strain BisB5).